Here is a 313-residue protein sequence, read N- to C-terminus: Porphobilinogen deaminase 2 (313 aa).

Cys246 carries the S-(dipyrrolylmethanemethyl)cysteine modification.

The protein belongs to the HMBS family. In terms of assembly, monomer. The cofactor is dipyrromethane.

The enzyme catalyses 4 porphobilinogen + H2O = hydroxymethylbilane + 4 NH4(+). The protein operates within porphyrin-containing compound metabolism; protoporphyrin-IX biosynthesis; coproporphyrinogen-III from 5-aminolevulinate: step 2/4. Tetrapolymerization of the monopyrrole PBG into the hydroxymethylbilane pre-uroporphyrinogen in several discrete steps. The chain is Porphobilinogen deaminase 2 (hemC2) from Streptomyces coelicolor (strain ATCC BAA-471 / A3(2) / M145).